The chain runs to 574 residues: Zinc finger and BTB domain-containing protein 3 (574 aa).

Residues 74–142 enclose the BTB domain; it reads CDCTVMVGST…MYAGQLTLRG (69 aa). 2 disordered regions span residues 175–277 and 305–346; these read AEAD…SSTE and SLRV…APAP. Residues K181 and K182 each participate in a glycyl lysine isopeptide (Lys-Gly) (interchain with G-Cter in SUMO2) cross-link. Over residues 187–212 the composition is skewed to polar residues; that stretch reads NSQLPSLEFLSSTSRGTQPSLASAET. The span at 323-334 shows a compositional bias: low complexity; sequence PPASAPTSAPAP. S362 carries the phosphoserine modification. Residues 364-403 are disordered; it reads EETDVSDEQPQGPERAFPSGGAVYGAQPSQPEAFEDPGAA. C2H2-type zinc fingers lie at residues 472–494 and 500–523; these read PTCK…ATVH and YECR…RKAH. A compositionally biased stretch (basic and acidic residues) spans 526–535; the sequence is DLAKRSKPDP. The interval 526–574 is disordered; that stretch reads DLAKRSKPDPEVGPLLGVQPLPGSPTADRQSSSGGGPPKDFVLAPKTNI. Residue K532 forms a Glycyl lysine isopeptide (Lys-Gly) (interchain with G-Cter in SUMO2) linkage. S549 carries the post-translational modification Phosphoserine.

It localises to the nucleus. Functionally, may be involved in transcriptional regulation. The sequence is that of Zinc finger and BTB domain-containing protein 3 (ZBTB3) from Homo sapiens (Human).